The primary structure comprises 107 residues: Replication restart protein PriB (107 aa).

Residues 1 to 97 (MNTLELSARV…LHLQQARRIA (97 aa)) enclose the SSB domain.

Belongs to the PriB family. Homodimer. Interacts with PriA and DnaT. Component of the replication restart primosome. Primosome assembly occurs via a 'hand-off' mechanism. PriA binds to replication forks, subsequently PriB then DnaT bind; DnaT then displaces ssDNA to generate the helicase loading substrate.

Functionally, involved in the restart of stalled replication forks, which reloads the replicative helicase on sites other than the origin of replication; the PriA-PriB pathway is the major replication restart pathway. During primosome assembly it facilitates complex formation between PriA and DnaT on DNA; stabilizes PriA on DNA. Stimulates the DNA unwinding activity of PriA helicase. The chain is Replication restart protein PriB from Bordetella parapertussis (strain 12822 / ATCC BAA-587 / NCTC 13253).